The chain runs to 456 residues: Amino acid transporter AVT6B (456 aa).

The next 11 helical transmembrane spans lie at 37–57 (FSGA…MALP), 58–78 (ATMK…MAFL), 118–138 (ILVS…DVLA), 164–184 (TFVL…FKRI), 191–211 (SAIS…ITII), 236–256 (LFTV…VHSI), 273–293 (ALAM…LLFG), 328–348 (LMLV…GLIF), 365–385 (SITA…PSIW), 388–408 (FQFT…AAVI), and 423–443 (IAIC…YSDA).

This sequence belongs to the amino acid/polyamine transporter 2 family. Amino acid/auxin permease (AAAP) (TC 2.A.18.6) subfamily.

It localises to the membrane. This is Amino acid transporter AVT6B from Arabidopsis thaliana (Mouse-ear cress).